Reading from the N-terminus, the 432-residue chain is MKFTKSEALHKEALEHIVGGVNSPSRSFKAVGGGAPVAMERGKGAYFWDVDGNKYIDYLAAYGPIITGHAHPHITKAITTAAENGVLYGTPTALEVKFAKMLKEAMPALDKVRFVNSGTEAVMTTIRVARAYTGRTKIMKFAGCYHGHSDLVLVAAGSGPSTLGTPDSAGVPQSIAQEVITVPFNNIETLKEALDKWGHEVAAILVEPIVGNFGIVEPKPGFLEKVNELVHEAGALVIYDEVITAFRFMYGGAQDLLGVTPDLTALGKVIGGGLPIGAYGGKKEIMEQVAPLGPAYQAGTMAGNPASMASGIACLEVLQQEGLYEKLDELGAMLEKGILEQAAKHNIDITLNRLKGALTVYFTTNTIEDYDAAQDTDGEMFGKFFKLMLQEGVNLAPSKYEAWFLTTEHTKEDIEYTIEAVGRAFAALADNK.

Lysine 268 carries the N6-(pyridoxal phosphate)lysine modification.

Belongs to the class-III pyridoxal-phosphate-dependent aminotransferase family. HemL subfamily. In terms of assembly, homodimer. Requires pyridoxal 5'-phosphate as cofactor.

The protein resides in the cytoplasm. The enzyme catalyses (S)-4-amino-5-oxopentanoate = 5-aminolevulinate. The protein operates within porphyrin-containing compound metabolism; protoporphyrin-IX biosynthesis; 5-aminolevulinate from L-glutamyl-tRNA(Glu): step 2/2. This is Glutamate-1-semialdehyde 2,1-aminomutase 1 from Bacillus cereus (strain ZK / E33L).